We begin with the raw amino-acid sequence, 189 residues long: Protein GrpE (189 aa).

The segment covering 1–20 has biased composition (polar residues); the sequence is MSDQQHSAPQNAAATASPSD. Residues 1–29 are disordered; that stretch reads MSDQQHSAPQNAAATASPSDSPEAVEATM.

This sequence belongs to the GrpE family. Homodimer.

The protein localises to the cytoplasm. Participates actively in the response to hyperosmotic and heat shock by preventing the aggregation of stress-denatured proteins, in association with DnaK and GrpE. It is the nucleotide exchange factor for DnaK and may function as a thermosensor. Unfolded proteins bind initially to DnaJ; upon interaction with the DnaJ-bound protein, DnaK hydrolyzes its bound ATP, resulting in the formation of a stable complex. GrpE releases ADP from DnaK; ATP binding to DnaK triggers the release of the substrate protein, thus completing the reaction cycle. Several rounds of ATP-dependent interactions between DnaJ, DnaK and GrpE are required for fully efficient folding. This is Protein GrpE from Paracidovorax citrulli (strain AAC00-1) (Acidovorax citrulli).